The chain runs to 413 residues: Multifunctional CCA protein (413 aa).

G8 and R11 together coordinate ATP. CTP is bound by residues G8 and R11. Residues D21 and D23 each coordinate Mg(2+). Residues R91, R137, and R140 each coordinate ATP. 3 residues coordinate CTP: R91, R137, and R140. An HD domain is found at 228-329 (TGIHTLMVLE…VKIFDKADLW (102 aa)).

Belongs to the tRNA nucleotidyltransferase/poly(A) polymerase family. Bacterial CCA-adding enzyme type 1 subfamily. As to quaternary structure, monomer. Can also form homodimers and oligomers. Mg(2+) serves as cofactor. It depends on Ni(2+) as a cofactor.

It catalyses the reaction a tRNA precursor + 2 CTP + ATP = a tRNA with a 3' CCA end + 3 diphosphate. The enzyme catalyses a tRNA with a 3' CCA end + 2 CTP + ATP = a tRNA with a 3' CCACCA end + 3 diphosphate. Its function is as follows. Catalyzes the addition and repair of the essential 3'-terminal CCA sequence in tRNAs without using a nucleic acid template. Adds these three nucleotides in the order of C, C, and A to the tRNA nucleotide-73, using CTP and ATP as substrates and producing inorganic pyrophosphate. tRNA 3'-terminal CCA addition is required both for tRNA processing and repair. Also involved in tRNA surveillance by mediating tandem CCA addition to generate a CCACCA at the 3' terminus of unstable tRNAs. While stable tRNAs receive only 3'-terminal CCA, unstable tRNAs are marked with CCACCA and rapidly degraded. The sequence is that of Multifunctional CCA protein from Shewanella sediminis (strain HAW-EB3).